A 776-amino-acid polypeptide reads, in one-letter code: A-type ATP synthase subunit A (776 aa).

It belongs to the ATPase alpha/beta chains family. As to quaternary structure, has multiple subunits with at least A(3), B(3), C, D, E, F, H, I and proteolipid K(x). This protein undergoes a protein self splicing that involves a post-translational excision of the VDE intervening region (intein) followed by peptide ligation.

It is found in the cell membrane. It catalyses the reaction ATP + H2O + 4 H(+)(in) = ADP + phosphate + 5 H(+)(out). Its function is as follows. Component of the A-type ATP synthase that produces ATP from ADP in the presence of a proton gradient across the membrane. The A chain is the catalytic subunit. This Thermoplasma volcanium (strain ATCC 51530 / DSM 4299 / JCM 9571 / NBRC 15438 / GSS1) protein is A-type ATP synthase subunit A.